A 364-amino-acid chain; its full sequence is Fructose-bisphosphate aldolase B (364 aa).

Position 2 is an N-acetylalanine (A2). Residue K13 is modified to N6-succinyllysine. At S36 the chain carries Phosphoserine. T39 carries the post-translational modification Phosphothreonine. Position 43 (R43) interacts with beta-D-fructose 1,6-bisphosphate. Phosphoserine is present on S89. The residue at position 119 (T119) is a Phosphothreonine. An N6-succinyllysine modification is found at K121. S132 is subject to Phosphoserine. Residue E188 is the Proton acceptor of the active site. K230 functions as the Schiff-base intermediate with dihydroxyacetone-P in the catalytic mechanism. Residues S272, S276, S299, and S301 each carry the phosphoserine modification. 272–274 (SGG) lines the beta-D-fructose 1,6-bisphosphate pocket. A beta-D-fructose 1,6-bisphosphate-binding site is contributed by R304. At S309 the chain carries Phosphoserine. K317 is modified (N6-succinyllysine).

Belongs to the class I fructose-bisphosphate aldolase family. Homotetramer. Interacts with BBS1, BBS2, BBS4 and BBS7. Forms a ternary complex with G6PD and TP53; this interaction is direct.

Its subcellular location is the cytoplasm. It is found in the cytosol. It localises to the cytoskeleton. The protein localises to the microtubule organizing center. The protein resides in the centrosome. Its subcellular location is the centriolar satellite. It catalyses the reaction beta-D-fructose 1,6-bisphosphate = D-glyceraldehyde 3-phosphate + dihydroxyacetone phosphate. The catalysed reaction is beta-D-fructose 1-phosphate = D-glyceraldehyde + dihydroxyacetone phosphate. It functions in the pathway carbohydrate degradation; glycolysis; D-glyceraldehyde 3-phosphate and glycerone phosphate from D-glucose: step 4/4. It participates in carbohydrate biosynthesis; gluconeogenesis. The protein operates within carbohydrate metabolism; fructose metabolism. Catalyzes the aldol cleavage of fructose 1,6-biphosphate to form two triosephosphates dihydroxyacetone phosphate and D-glyceraldehyde 3-phosphate in glycolysis as well as the reverse stereospecific aldol addition reaction in gluconeogenesis. In fructolysis, metabolizes fructose 1-phosphate derived from the phosphorylation of dietary fructose by fructokinase into dihydroxyacetone phosphate and D-glyceraldehyde. Acts as an adapter independently of its enzymatic activity, exerts a tumor suppressor role by stabilizing the ternary complex with G6PD and TP53 to inhibit G6PD activity and keep oxidative pentose phosphate metabolism in check. This chain is Fructose-bisphosphate aldolase B (Aldob), found in Rattus norvegicus (Rat).